Consider the following 205-residue polypeptide: Outer-membrane lipoprotein LolB (205 aa).

An N-terminal signal peptide occupies residues 1–17 (MRLRLFLAASALALLSG). C18 is lipidated: N-palmitoyl cysteine. The S-diacylglycerol cysteine moiety is linked to residue C18.

This sequence belongs to the LolB family. As to quaternary structure, monomer.

The protein resides in the cell outer membrane. Functionally, plays a critical role in the incorporation of lipoproteins in the outer membrane after they are released by the LolA protein. This Pseudomonas aeruginosa (strain LESB58) protein is Outer-membrane lipoprotein LolB.